A 130-amino-acid chain; its full sequence is ER membrane protein complex subunit 5 (130 aa).

The Cytoplasmic portion of the chain corresponds to 1-3 (MAS). Residues 4–22 (SFWKGVVGIGLFALAHAAF) form a helical membrane-spanning segment. Topologically, residues 23–43 (SAAQHRSYMRLTEKENETLPI) are lumenal. The helical transmembrane segment at 44 to 63 (DIVLQTLLSFVITCYGIVHI) threads the bilayer. Residues 64–130 (SGEFKDMDAS…LRLRKLENFH (67 aa)) lie on the Cytoplasmic side of the membrane.

Belongs to the membrane magnesium transporter (TC 1.A.67) family. Component of the ER membrane protein complex (EMC).

It localises to the endoplasmic reticulum membrane. The protein localises to the golgi apparatus membrane. It is found in the early endosome membrane. Its function is as follows. Part of the endoplasmic reticulum membrane protein complex (EMC) that enables the energy-independent insertion into endoplasmic reticulum membranes of newly synthesized membrane proteins. Preferentially accommodates proteins with transmembrane domains that are weakly hydrophobic or contain destabilizing features such as charged and aromatic residues. Involved in the cotranslational insertion of multi-pass membrane proteins in which stop-transfer membrane-anchor sequences become ER membrane spanning helices. It is also required for the post-translational insertion of tail-anchored/TA proteins in endoplasmic reticulum membranes. By mediating the proper cotranslational insertion of N-terminal transmembrane domains in an N-exo topology, with translocated N-terminus in the lumen of the ER, controls the topology of multi-pass membrane proteins like the G protein-coupled receptors. By regulating the insertion of various proteins in membranes, it is indirectly involved in many cellular processes. May be involved in Mg(2+) transport. This chain is ER membrane protein complex subunit 5, found in Danio rerio (Zebrafish).